Reading from the N-terminus, the 530-residue chain is Protein P80 (530 aa).

Positions 1-22 are cleaved as a signal peptide; sequence MKVISGLLFFILISCSLFLVQG. A helical membrane pass occupies residues 491 to 511; that stretch reads MLVAMTFNVALFFAVIAGVLV.

It belongs to the SLC31A transporter family.

The protein resides in the late endosome membrane. The sequence is that of Protein P80 (p80) from Dictyostelium discoideum (Social amoeba).